We begin with the raw amino-acid sequence, 475 residues long: 3-keto-steroid reductase ERG27 (475 aa).

Isoleucine 32, isoleucine 55, threonine 59, and lysine 65 together coordinate NADP(+). Active-site proton donor residues include serine 249 and tyrosine 272. NADP(+)-binding residues include tyrosine 272, lysine 276, valine 324, and serine 326. Lysine 276 serves as the catalytic Lowers pKa of active site Tyr.

It belongs to the short-chain dehydrogenases/reductases (SDR) family. ERG27 subfamily. Heterotetramer of ERG25, ERG26, ERG27 and ERG28. ERG28 acts as a scaffold to tether ERG27 and other 4,4-demethylation-related enzymes, forming a demethylation enzyme complex, in the endoplasmic reticulum.

The protein resides in the endoplasmic reticulum membrane. It localises to the lipid droplet. It functions in the pathway steroid metabolism; ergosterol biosynthesis. Functionally, 3-keto-steroid reductase; part of the third module of ergosterol biosynthesis pathway that includes the late steps of the pathway. ERG27 is a catalytic component of the C-4 demethylation complex that catalyzes the conversion of 4,4-dimethylfecosterol into fecosterol via 4-methylfecosterol. The third module or late pathway involves the ergosterol synthesis itself through consecutive reactions that mainly occur in the endoplasmic reticulum (ER) membrane. Firstly, the squalene synthase ERG9 catalyzes the condensation of 2 farnesyl pyrophosphate moieties to form squalene, which is the precursor of all steroids. Squalene synthase is crucial for balancing the incorporation of farnesyl diphosphate (FPP) into sterol and nonsterol isoprene synthesis. Secondly, squalene is converted into lanosterol by the consecutive action of the squalene epoxidase ERG1 and the lanosterol synthase ERG7. Then, the delta(24)-sterol C-methyltransferase ERG6 methylates lanosterol at C-24 to produce eburicol. Eburicol is the substrate of the sterol 14-alpha demethylase encoded by CYP51A, CYP51B and CYP51C, to yield 4,4,24-trimethyl ergosta-8,14,24(28)-trienol. CYP51B encodes the enzyme primarily responsible for sterol 14-alpha-demethylation, and plays an essential role in ascospore formation. CYP51A encodes an additional sterol 14-alpha-demethylase, induced on ergosterol depletion and responsible for the intrinsic variation in azole sensitivity. The third CYP51 isoform, CYP51C, does not encode a sterol 14-alpha-demethylase, but is required for full virulence on host wheat ears. The C-14 reductase ERG24 then reduces the C14=C15 double bond which leads to 4,4-dimethylfecosterol. A sequence of further demethylations at C-4, involving the C-4 demethylation complex containing the C-4 methylsterol oxidases ERG25, the sterol-4-alpha-carboxylate 3-dehydrogenase ERG26 and the 3-keto-steroid reductase ERG27, leads to the production of fecosterol via 4-methylfecosterol. ERG28 has a role as a scaffold to help anchor ERG25, ERG26 and ERG27 to the endoplasmic reticulum. The C-8 sterol isomerase ERG2 then catalyzes the reaction which results in unsaturation at C-7 in the B ring of sterols and thus converts fecosterol to episterol. The sterol-C5-desaturases ERG3A and ERG3BB then catalyze the introduction of a C-5 double bond in the B ring to produce 5-dehydroepisterol. The C-22 sterol desaturases ERG5A and ERG5B further convert 5-dehydroepisterol into ergosta-5,7,22,24(28)-tetraen-3beta-ol by forming the C-22(23) double bond in the sterol side chain. Finally, ergosta-5,7,22,24(28)-tetraen-3beta-ol is substrate of the C-24(28) sterol reductase ERG4 to produce ergosterol. This chain is 3-keto-steroid reductase ERG27, found in Gibberella zeae (strain ATCC MYA-4620 / CBS 123657 / FGSC 9075 / NRRL 31084 / PH-1) (Wheat head blight fungus).